Reading from the N-terminus, the 272-residue chain is Zinc transporter ZupT (272 aa).

Helical transmembrane passes span 12–32, 40–60, 76–96, 126–146, 158–178, 187–207, 211–231, and 247–267; these read ALAV…MVVF, LLAF…LSEI, LGFT…MVID, LLTA…TFFA, AFAI…PVYF, FGAS…GYLL, VLSE…MVFL, and HETV…LVLF. The Fe(2+) site is built by N136 and E139. Zn(2+) contacts are provided by E139 and H164. 3 residues coordinate Fe(2+): N165, E168, and E197. A Zn(2+)-binding site is contributed by E168.

The protein belongs to the ZIP transporter (TC 2.A.5) family. ZupT subfamily.

Its subcellular location is the cell inner membrane. It carries out the reaction Zn(2+)(in) = Zn(2+)(out). Its function is as follows. Mediates zinc uptake. May also transport other divalent cations. The polypeptide is Zinc transporter ZupT (Xanthomonas campestris pv. campestris (strain ATCC 33913 / DSM 3586 / NCPPB 528 / LMG 568 / P 25)).